The primary structure comprises 70 residues: MNNQQKIKCPICDKQNTWRPDNLFRPFCSERCKLIDLGEWASESRKIPGSSIDPESIVTTNNKQDNVDEQ.

Zn(2+) is bound by residues Cys9, Cys12, Cys28, and Cys32. The segment at 44-70 (SRKIPGSSIDPESIVTTNNKQDNVDEQ) is disordered.

The protein belongs to the DNA gyrase inhibitor YacG family. Interacts with GyrB. Zn(2+) is required as a cofactor.

In terms of biological role, inhibits all the catalytic activities of DNA gyrase by preventing its interaction with DNA. Acts by binding directly to the C-terminal domain of GyrB, which probably disrupts DNA binding by the gyrase. The polypeptide is DNA gyrase inhibitor YacG (Legionella pneumophila subsp. pneumophila (strain Philadelphia 1 / ATCC 33152 / DSM 7513)).